Here is a 264-residue protein sequence, read N- to C-terminus: 1H-3-hydroxy-4-oxoquinoline 2,4-dioxygenase (264 aa).

Residues 30 to 32 (WCQ), 94 to 95 (TS), and tryptophan 153 contribute to the substrate site. Residue histidine 244 is the Proton donor/acceptor of the active site.

Belongs to the AB hydrolase superfamily. None. Contrary to most other dioxygenases, this enzyme does not require a cofactor for catalysis. serves as cofactor.

The enzyme catalyses 3-hydroxy-1H-quinolin-4-one + O2 = N-formylanthranilate + CO + H(+). Ring-cleaving dioxygenase involved in oxoquinoline degradation and utilization. This is 1H-3-hydroxy-4-oxoquinoline 2,4-dioxygenase (qdo) from Pseudomonas putida (Arthrobacter siderocapsulatus).